The following is a 128-amino-acid chain: UPF0292 protein MJ1624 (128 aa).

The Toprim domain occupies 23 to 105 (EKPIIVEGKR…KVNTKIRHEI (83 aa)). 3 residues coordinate Mg(2+): Glu-29, Asp-74, and Asp-76.

It belongs to the UPF0292 family. Mg(2+) serves as cofactor.

This is UPF0292 protein MJ1624 from Methanocaldococcus jannaschii (strain ATCC 43067 / DSM 2661 / JAL-1 / JCM 10045 / NBRC 100440) (Methanococcus jannaschii).